The sequence spans 291 residues: ATP synthase gamma chain (291 aa).

The protein belongs to the ATPase gamma chain family. In terms of assembly, F-type ATPases have 2 components, CF(1) - the catalytic core - and CF(0) - the membrane proton channel. CF(1) has five subunits: alpha(3), beta(3), gamma(1), delta(1), epsilon(1). CF(0) has three main subunits: a, b and c.

The protein localises to the cell membrane. Functionally, produces ATP from ADP in the presence of a proton gradient across the membrane. The gamma chain is believed to be important in regulating ATPase activity and the flow of protons through the CF(0) complex. This is ATP synthase gamma chain from Streptococcus pyogenes serotype M3 (strain ATCC BAA-595 / MGAS315).